The chain runs to 102 residues: Ferredoxin-thioredoxin reductase, catalytic chain (102 aa).

C53 contributes to the [4Fe-4S] cluster binding site. The active-site Nucleophile is C55. C55 and C85 are oxidised to a cystine. Positions 72, 74, and 83 each coordinate [4Fe-4S] cluster.

Belongs to the ferredoxin thioredoxin reductase beta subunit family. As to quaternary structure, heterodimer of subunit A (variable subunit) and subunit B (catalytic subunit). Heterodimeric FTR forms a complex with ferredoxin and thioredoxin. [4Fe-4S] cluster serves as cofactor.

Its subcellular location is the plastid. It is found in the chloroplast. It carries out the reaction [thioredoxin]-disulfide + 2 reduced [2Fe-2S]-[ferredoxin] + 2 H(+) = [thioredoxin]-dithiol + 2 oxidized [2Fe-2S]-[ferredoxin]. In terms of biological role, catalytic subunit of the ferredoxin-thioredoxin reductase (FTR), which catalyzes the two-electron reduction of thioredoxins by the electrons provided by reduced ferredoxin. In Guillardia theta (Cryptophyte), this protein is Ferredoxin-thioredoxin reductase, catalytic chain (ftrB).